Here is a 299-residue protein sequence, read N- to C-terminus: Taste receptor type 2 member 4 (299 aa).

At 1–9 the chain is on the extracellular side; it reads MLRLFYFSA. Residues 10–30 traverse the membrane as a helical segment; it reads IIASVILNFVGIIMNLFITVV. At 31 to 46 the chain is on the cytoplasmic side; it reads NCKTWVKSHRISSSDR. The chain crosses the membrane as a helical span at residues 47–67; that stretch reads ILFSLGITRFLMLGLFLVNTI. Residues 68-81 lie on the Extracellular side of the membrane; sequence YFVSSNXERSVYLS. A helical membrane pass occupies residues 82–102; the sequence is AFFVLCFMFLDSSSLWFVTLL. At 103 to 131 the chain is on the cytoplasmic side; the sequence is NILYCVKITNFQHSVFLLLKRNISPKIPR. Residues 132-152 form a helical membrane-spanning segment; sequence LLLACVLISAFTTCLYITLSQ. Over 153-172 the chain is Extracellular; it reads ASPFPELVTTRNNTSFNINE. Asn-164 and Asn-165 each carry an N-linked (GlcNAc...) asparagine glycan. The chain crosses the membrane as a helical span at residues 173–193; the sequence is GILSLVVSLVLSSSLQFIINV. Residues 194 to 230 are Cytoplasmic-facing; sequence TSASLLIHSLRRHIQKMQKNATGFWNPQTEAHVGAMK. Residues 231 to 251 traverse the membrane as a helical segment; sequence LMVYFLILYIPYSVATLVQYL. Residues 252–262 are Extracellular-facing; it reads PFYAGMDMGTK. Residues 263–283 traverse the membrane as a helical segment; it reads SICLIFATLYSPGHSVLIIIT. Topologically, residues 284-299 are cytoplasmic; that stretch reads HPKLKTTAKKILCFKK.

The protein belongs to the G-protein coupled receptor T2R family.

It localises to the membrane. It is found in the cell projection. Its subcellular location is the cilium membrane. Its function is as follows. Gustducin-coupled receptor implicated in the perception of bitter compounds in the oral cavity and the gastrointestinal tract. Signals through PLCB2 and the calcium-regulated cation channel TRPM5. In airway epithelial cells, binding of denatonium increases the intracellular calcium ion concentration and stimulates ciliary beat frequency. This is Taste receptor type 2 member 4 (TAS2R4) from Pan troglodytes (Chimpanzee).